A 301-amino-acid chain; its full sequence is Mitochondrial carnitine/acylcarnitine carrier protein (301 aa).

A2 is subject to N-acetylalanine. Residues 2-12 are Cytoplasmic-facing; the sequence is AEEPKPISPLK. Solcar repeat units lie at residues 8 to 99, 108 to 196, and 207 to 293; these read ISPL…GKRL, LTYP…LKNL, and LSVP…PMKI. Residues 13 to 31 form a helical membrane-spanning segment; the sequence is NLLAGGFGGVCLVFVGHPL. Over 32–73 the chain is Mitochondrial matrix; that stretch reads DTVKVRLQTQPPSLPGQPPMYSGTIDCFRKTLFREGITGLYR. The helical transmembrane segment at 74–93 threads the bilayer; sequence GMAAPIIGVTPMFAVCFFGF. At 94–112 the chain is on the cytoplasmic side; that stretch reads GLGKRLQQKSPEDELTYPQ. The chain crosses the membrane as a helical span at residues 113–131; the sequence is LFTAGMLSGVFTTGIMTPG. Residues 132 to 170 lie on the Mitochondrial matrix side of the membrane; it reads ERIKCLLQIQASSGKNKYSGTLDCAKKLYQEFGIRGFYK. 2 positions are modified to N6-acetyllysine: K148 and K157. An N6-acetyllysine; alternate modification is found at K170. K170 is subject to N6-succinyllysine; alternate. The helical transmembrane segment at 171-190 threads the bilayer; the sequence is GTALTLMRDVPASGMYFMTY. Residues 191 to 211 are Cytoplasmic-facing; sequence EWLKNLFTPQGKSVHDLSVPR. A helical transmembrane segment spans residues 212-230; it reads VLVAGGFRGIFNWVVAIPP. Topologically, residues 231-267 are mitochondrial matrix; it reads DVLKSRFQTAPPGKYPNGFRDVLRELIREEGVTSLYK. The helical transmembrane segment at 268–287 threads the bilayer; that stretch reads GFNAVMIRAFPANAACFLGF. The Cytoplasmic portion of the chain corresponds to 288–301; sequence EIPMKILNWIAPNL.

The protein belongs to the mitochondrial carrier (TC 2.A.29) family. Post-translationally, the N-terminus is blocked.

The protein resides in the mitochondrion inner membrane. The catalysed reaction is O-acetyl-(R)-carnitine(in) + (R)-carnitine(out) = O-acetyl-(R)-carnitine(out) + (R)-carnitine(in). The enzyme catalyses an O-acyl-(R)-carnitine(in) + (R)-carnitine(out) = an O-acyl-(R)-carnitine(out) + (R)-carnitine(in). It catalyses the reaction O-propanoyl-(R)-carnitine(in) + (R)-carnitine(out) = O-propanoyl-(R)-carnitine(out) + (R)-carnitine(in). It carries out the reaction O-hexadecanoyl-(R)-carnitine(in) + (R)-carnitine(out) = O-hexadecanoyl-(R)-carnitine(out) + (R)-carnitine(in). The catalysed reaction is O-octanoyl-(R)-carnitine(in) + (R)-carnitine(out) = O-octanoyl-(R)-carnitine(out) + (R)-carnitine(in). The enzyme catalyses (R)-carnitine(in) = (R)-carnitine(out). Its function is as follows. Mediates the electroneutral exchange of acylcarnitines (O-acyl-(R)-carnitine or L-acylcarnitine) of different acyl chain lengths (ranging from O-acetyl-(R)-carnitine to long-chain O-acyl-(R)-carnitines) with free carnitine ((R)-carnitine or L-carnitine) across the mitochondrial inner membrane, via a ping-pong mechanism. Key player in the mitochondrial oxidation pathway, it translocates the fatty acids in the form of acylcarnitines into the mitochondrial matrix, where the carnitine palmitoyltransferase 2 (CPT-2) activates them to undergo fatty acid beta-oxidation. Catalyzes the unidirectional transport (uniport) of carnitine at lower rates than the antiport (exchange). This chain is Mitochondrial carnitine/acylcarnitine carrier protein, found in Rattus norvegicus (Rat).